The primary structure comprises 547 residues: MKNTFILGIEGTAWNLSAAIVTETEIIAEVTETYKPEVGGIHPREAAQHHAKYAASVIKRLLAEAKEKGVEPSDLDGIAFSQGPGLGPCLRTIATAARMLSLSLDIPLIGVNHCIAHIEIGIWRTPARDPVVLYVSGANSQVISFMEGRYRVFGETLDIGLGNALDKFARRAGLPHPGGPKIEACAKDAKRYIPLPYVIKGMDLSFSGLSTASSEALKKASLEDVCYSYQETAFAMVVEVAERALAHTGKNEVLLAGGVGANTRLREMLNEMCEARGAKFYVPEKRFMGDNGTMIAYTGLLMYKSGNTLTLEDSRVNPNFRTDDVNVTWIKEEEMKKVPEISPEAFLRAPPGERLDNGAEAVIYLDEGPEGKKVLVKERVPKLYRHKEIDERIRRERNRTEARLISEARRAGVPTPIIYDIEEFKLKMQFIEGVPIKYLITPELSEKVGELVGRLHSSGIVHGDLTTSNLLLAGERLYLIDFGLAYFDKSLEARGVDVHVLFQTFESTHRGHETLVKAFEKGYGSTFIDSKDVLKRVEEIKKRARYA.

Residues 1–329 (MKNTFILGIE…FRTDDVNVTW (329 aa)) form a kae1 region. Fe cation contacts are provided by His-113, His-117, and Tyr-134. L-threonylcarbamoyladenylate contacts are provided by residues 134-138 (YVSGA), Asp-166, Gly-179, Glu-183, and Asn-262. Asp-290 serves as a coordination point for Fe cation. The Protein kinase domain maps to 340 to 547 (EISPEAFLRA…EEIKKRARYA (208 aa)). ATP is bound by residues 355 to 363 (LDNGAEAVI) and Lys-377. Catalysis depends on Asp-464, which acts as the Proton acceptor; for kinase activity.

In the N-terminal section; belongs to the KAE1 / TsaD family. It in the C-terminal section; belongs to the protein kinase superfamily. Tyr protein kinase family. BUD32 subfamily. As to quaternary structure, component of the KEOPS complex that consists of Kae1, Bud32, Cgi121 and Pcc1; the whole complex dimerizes. Fe(2+) serves as cofactor.

The protein resides in the cytoplasm. It catalyses the reaction L-seryl-[protein] + ATP = O-phospho-L-seryl-[protein] + ADP + H(+). The enzyme catalyses L-threonyl-[protein] + ATP = O-phospho-L-threonyl-[protein] + ADP + H(+). The catalysed reaction is L-threonylcarbamoyladenylate + adenosine(37) in tRNA = N(6)-L-threonylcarbamoyladenosine(37) in tRNA + AMP + H(+). Functionally, required for the formation of a threonylcarbamoyl group on adenosine at position 37 (t(6)A37) in tRNAs that read codons beginning with adenine. Is a component of the KEOPS complex that is probably involved in the transfer of the threonylcarbamoyl moiety of threonylcarbamoyl-AMP (TC-AMP) to the N6 group of A37. The Kae1 domain likely plays a direct catalytic role in this reaction. The Bud32 domain probably displays kinase activity that regulates Kae1 function. In Methanosarcina acetivorans (strain ATCC 35395 / DSM 2834 / JCM 12185 / C2A), this protein is Probable bifunctional tRNA threonylcarbamoyladenosine biosynthesis protein.